The sequence spans 101 residues: Large ribosomal subunit protein uL24 (101 aa).

The protein belongs to the universal ribosomal protein uL24 family. In terms of assembly, part of the 50S ribosomal subunit.

Its function is as follows. One of two assembly initiator proteins, it binds directly to the 5'-end of the 23S rRNA, where it nucleates assembly of the 50S subunit. In terms of biological role, one of the proteins that surrounds the polypeptide exit tunnel on the outside of the subunit. The protein is Large ribosomal subunit protein uL24 of Streptococcus sanguinis (strain SK36).